A 109-amino-acid polypeptide reads, in one-letter code: MVRRSGVTLLVVALLVVTLMSSVSAQLNFSPGWGKRAAGASGSNGGVGEAVSGLHPSVGGAPGGVVPPGSSSPGDSCGPIPVSAVMHIYRLIRSEAVRLVQCQDEEYLG.

The signal sequence occupies residues 1–25 (MVRRSGVTLLVVALLVVTLMSSVSA). Pyrrolidone carboxylic acid is present on glutamine 26. Tryptophan 33 bears the Tryptophan amide mark. A disordered region spans residues 34–78 (GKRAAGASGSNGGVGEAVSGLHPSVGGAPGGVVPPGSSSPGDSCG). 2 stretches are compositionally biased toward low complexity: residues 49-59 (EAVSGLHPSVG) and 67-78 (PPGSSSPGDSCG).

This sequence belongs to the AKH/HRTH/RPCH family.

It localises to the secreted. This hormone adapts the animal to light backgrounds by stimulating concentration of the pigment of its red body-chromatophores. The protein is Red pigment-concentrating prohormone of Callinectes sapidus (Blue crab).